Reading from the N-terminus, the 410-residue chain is Benzene 1,2-dioxygenase system ferredoxin--NAD(+) reductase subunit (410 aa).

4-35 provides a ligand contact to FAD; that stretch reads HVAIIGNGVAGFTTAQALRAEGYEGRISLIGE. 145–173 is a binding site for NAD(+); it reads RLLIVGGGLIGCEVATTARKLGLSVTILE.

It belongs to the bacterial ring-hydroxylating dioxygenase ferredoxin reductase family. This dioxygenase system consists of four proteins: the two subunits of the hydroxylase component (BedC1 and BedC2), a ferredoxin (BedB) and a ferredoxin reductase (BedA). Requires FAD as cofactor.

It carries out the reaction 2 reduced [2Fe-2S]-[ferredoxin] + NAD(+) + H(+) = 2 oxidized [2Fe-2S]-[ferredoxin] + NADH. The protein operates within aromatic compound metabolism; benzene degradation; catechol from benzene: step 1/2. Part of the electron transfer component of benzene 1,2-dioxygenase, transfers electrons from ferredoxin to NADH. The protein is Benzene 1,2-dioxygenase system ferredoxin--NAD(+) reductase subunit (bedA) of Pseudomonas putida (Arthrobacter siderocapsulatus).